A 388-amino-acid polypeptide reads, in one-letter code: Succinate--CoA ligase [ADP-forming] subunit beta (388 aa).

The 236-residue stretch at 9–244 (KQLFAEYGLP…PSQEDEREAH (236 aa)) folds into the ATP-grasp domain. Residues K46, 53-55 (GRG), E99, T102, and E107 each bind ATP. Residues N199 and D213 each contribute to the Mg(2+) site. Residues N264 and 321–323 (GIV) contribute to the substrate site.

The protein belongs to the succinate/malate CoA ligase beta subunit family. Heterotetramer of two alpha and two beta subunits. The cofactor is Mg(2+).

The catalysed reaction is succinate + ATP + CoA = succinyl-CoA + ADP + phosphate. The enzyme catalyses GTP + succinate + CoA = succinyl-CoA + GDP + phosphate. It participates in carbohydrate metabolism; tricarboxylic acid cycle; succinate from succinyl-CoA (ligase route): step 1/1. Functionally, succinyl-CoA synthetase functions in the citric acid cycle (TCA), coupling the hydrolysis of succinyl-CoA to the synthesis of either ATP or GTP and thus represents the only step of substrate-level phosphorylation in the TCA. The beta subunit provides nucleotide specificity of the enzyme and binds the substrate succinate, while the binding sites for coenzyme A and phosphate are found in the alpha subunit. This is Succinate--CoA ligase [ADP-forming] subunit beta from Colwellia psychrerythraea (strain 34H / ATCC BAA-681) (Vibrio psychroerythus).